The primary structure comprises 106 residues: Large ribosomal subunit protein uL24 (106 aa).

Belongs to the universal ribosomal protein uL24 family. As to quaternary structure, part of the 50S ribosomal subunit.

Its function is as follows. One of two assembly initiator proteins, it binds directly to the 5'-end of the 23S rRNA, where it nucleates assembly of the 50S subunit. One of the proteins that surrounds the polypeptide exit tunnel on the outside of the subunit. The polypeptide is Large ribosomal subunit protein uL24 (Bordetella avium (strain 197N)).